Consider the following 768-residue polypeptide: MSNLGKSTGSRKDTKMRIRAFPMTMDEKYVNSIWDLLKNAIQEIQRKNNSGLSFEELYRNAYTMVLHKHGEKLYTGLREVVTEHLINKVREDVLNSLNNNFLQTLNQAWNDHQTAMVMIRDILMYMDRVYVQQNNVENVYNLGLIIFRDQVVRYGCIRDHLRQTLLDMIARERKGEVVDRGAIRNACQMLMILGLEGRSVYEEDFEAPFLEMSAEFFQMESQKFLAENSASVYIKKVEARINEEIERVMHCLDKSTEEPIVKVVERELISKHMKTIVEMENSGLVHMLKNGKTEDLACMYKLFSRVPNGLKTMCECMSLYLREQGKALVSEEGEGKNPVDYIQGLLDLKSRFDRFLQESFSNDRLFKQTIAGDFEYFLNLNSRSPEYLSLFIDDKLKKGVKGLTEQEVESILDKAMVLFRFMQEKDVFERYYKQHLARRLLTNKSVSDDSEKNMISKLKTECGCQFTSKLEGMFRDMSISNTTMDEFRQHLQTTGVSLGGVDLTVRVLTTGYWPTQSATPKCNIPPAPRHAFEIFRRFYLAKHSGRQLTLQHHMGSADLNATFYGPVKKEDGSEVGVGGAQVTGSNTRKHILQVSTFQMTILMLFNNRDKYTFEEIQQETDIPERELVRALQSLACGKPTQRVLTKEPKSKEIESGHMFTVNDQFTSKLHRVKIQTVAAKQGESDPERKETRQKVDDDRKHEIEAAIVRIMKSRKKMQHNVLVAEVTQQLKARFLPSPVVIKKRIEGLIEREYLARTPEDRKVYTYVA.

The interval 677-698 (VAAKQGESDPERKETRQKVDDD) is disordered. The segment covering 682–698 (GESDPERKETRQKVDDD) has biased composition (basic and acidic residues). The Cullin neddylation domain maps to 698–760 (DRKHEIEAAI…REYLARTPED (63 aa)). A Glycyl lysine isopeptide (Lys-Gly) (interchain with G-Cter in NEDD8) cross-link involves residue Lys-712.

It belongs to the cullin family. As to quaternary structure, component of multiple BCR (BTB-CUL3-RBX1) E3 ubiquitin-protein ligase complexes formed of cul3, rbx1 and a variable BTB domain-containing protein acting as both, adapter to cullin and substrate recognition subunit. Interacts with btbd6. Post-translationally, neddylated. Attachment of NEDD8 is required for the E3 ubiquitin-protein ligase activity of the SCF-like complex.

Its subcellular location is the nucleus. The protein operates within protein modification; protein ubiquitination. Functionally, probable core component of cullin-based SCF-like E3 ubiquitin-protein ligase complexes which mediate the ubiquitination and subsequent proteasomal degradation of target proteins. The E3 ubiquitin-protein ligase activity of the complex is dependent on the neddylation of the cullin subunit. Involved in ER-Golgi transport by regulating the size of COPII coats, thereby playing a key role in collagen export, which is required for embryonic stem (ES) cells division. May play a role in the regulation of mittotic entry via ubiquitination of aurka. This chain is Cullin-3-A (cul3a), found in Xenopus laevis (African clawed frog).